Here is a 149-residue protein sequence, read N- to C-terminus: MTKGQRLIKIREIITQSEIETQDELVEELRNAGYKVTQATVSRDIKELHLVKVPLNDGRYKYSLPADQRFNPLGKLRRLLGDSFISIDSAQNLIVMHVLPGNANALGVLLDHLNWPELLGTVCGDDTILMITRNEEAATEVTERILGML.

The protein belongs to the ArgR family.

The protein localises to the cytoplasm. It participates in amino-acid biosynthesis; L-arginine biosynthesis [regulation]. In terms of biological role, regulates arginine biosynthesis genes. This is Arginine repressor from Exiguobacterium sibiricum (strain DSM 17290 / CCUG 55495 / CIP 109462 / JCM 13490 / 255-15).